A 638-amino-acid polypeptide reads, in one-letter code: Threonine--tRNA ligase (638 aa).

A TGS domain is found at 1-61; the sequence is MPVVTLPDGS…EADAEVALVT (61 aa). The interval 242–533 is catalytic; the sequence is DHRKLGKALD…LTEHYAGQYP (292 aa). Positions 333, 384, and 510 each coordinate Zn(2+).

This sequence belongs to the class-II aminoacyl-tRNA synthetase family. In terms of assembly, homodimer. It depends on Zn(2+) as a cofactor.

The protein localises to the cytoplasm. The enzyme catalyses tRNA(Thr) + L-threonine + ATP = L-threonyl-tRNA(Thr) + AMP + diphosphate + H(+). In terms of biological role, catalyzes the attachment of threonine to tRNA(Thr) in a two-step reaction: L-threonine is first activated by ATP to form Thr-AMP and then transferred to the acceptor end of tRNA(Thr). Also edits incorrectly charged L-seryl-tRNA(Thr). This is Threonine--tRNA ligase from Methylococcus capsulatus (strain ATCC 33009 / NCIMB 11132 / Bath).